A 475-amino-acid chain; its full sequence is Sulfate adenylyltransferase subunit 1 (475 aa).

Residues 25–239 (KSLLRFLTCG…EVLETVEIQR (215 aa)) enclose the tr-type G domain. Residues 34-41 (GSVDDGKS) form a G1 region. GTP is bound at residue 34–41 (GSVDDGKS). The segment at 92 to 96 (GITID) is G2. The interval 113 to 116 (DTPG) is G3. GTP contacts are provided by residues 113-117 (DTPGH) and 168-171 (NKMD). A G4 region spans residues 168-171 (NKMD). The interval 206 to 208 (SAL) is G5.

It belongs to the TRAFAC class translation factor GTPase superfamily. Classic translation factor GTPase family. CysN/NodQ subfamily. As to quaternary structure, heterodimer composed of CysD, the smaller subunit, and CysN.

It catalyses the reaction sulfate + ATP + H(+) = adenosine 5'-phosphosulfate + diphosphate. It participates in sulfur metabolism; hydrogen sulfide biosynthesis; sulfite from sulfate: step 1/3. Its function is as follows. With CysD forms the ATP sulfurylase (ATPS) that catalyzes the adenylation of sulfate producing adenosine 5'-phosphosulfate (APS) and diphosphate, the first enzymatic step in sulfur assimilation pathway. APS synthesis involves the formation of a high-energy phosphoric-sulfuric acid anhydride bond driven by GTP hydrolysis by CysN coupled to ATP hydrolysis by CysD. The protein is Sulfate adenylyltransferase subunit 1 of Shigella boydii serotype 18 (strain CDC 3083-94 / BS512).